A 733-amino-acid chain; its full sequence is E3 ubiquitin-protein ligase COP1 (733 aa).

The disordered stretch occupies residues 1 to 43; sequence MSGSRQAGSGSAGTSPGSSAASSVTSASSSLSSSPSPPSVAAS. The short motif at 111 to 115 is the Nuclear localization signal 1 element; it reads SSRKR. The RING-type zinc-finger motif lies at 138–176; sequence CPICFDMIEEAYMTKCGHSFCYKCIHQSLEDNNRCPKCN. The short motif at 197–208 is the Nuclear localization signal 2 element; the sequence is KQKQRFEEKRFK. Residues 231–306 are a coiled coil; the sequence is DQDNLDLANV…RVEEMSGLYS (76 aa). The short motif at 237–247 is the Nuclear export signal element; the sequence is LANVNLMLELL. Residues 307–327 are disordered; it reads PVSEDSTVPQFEAPSPSHSSI. WD repeat units lie at residues 421-460, 470-510, 513-553, 555-595, 599-637, 640-679, and 695-731; these read NGSSIVSSIEFDRDCDYFAIAGVTKKIKVYEYGTVIQDAV, TCNS…RSKV, EHEK…SVAS, EAKA…QPIM, GHRKAVSYAKFVSGEEIVSASTDSQLKLWNVGKPYCLRS, GHINEKNFVGLASNGDYIACGSENNSLYLYYKGLSKTLLT, and EDDTNEFVSAVCWRALSDGESNVLIAANSQGTIKVLE. The interaction with TRIB1 stretch occupies residues 645 to 647; it reads KNF.

Belongs to the COP1 family. In terms of assembly, homodimer. Homodimerization is mediated by the coiled coil domain. Component of the DCX DET1-COP1 ubiquitin ligase complex at least composed of RBX1, DET1, DDB1, CUL4A and COP1. Isoform 2 does not interact with CUL4A but still binds to RBX1, suggesting that the interaction may be mediated by another cullin protein. Isoform 1 and isoform 2 interact with CUL5 but not with CUL1, CUL2 not CUL3. Interacts with bZIP transcription factors JUN, JUNB and JUND but not with FOS, ATF2 nor XBP1. Interacts with p53 (TP53). Interacts with COPS6; this interaction stabilizes RFWD2 through reducing its auto-ubiquitination and decelerating its turnover rate. Interacts with SFN; this interaction leads to SFN degradation. Interacts with p53/TP53 and MTA1. Interacts with TRIB1 (via C-terminus) and TRIB2.

The protein resides in the nucleus speckle. It is found in the cytoplasm. The catalysed reaction is S-ubiquitinyl-[E2 ubiquitin-conjugating enzyme]-L-cysteine + [acceptor protein]-L-lysine = [E2 ubiquitin-conjugating enzyme]-L-cysteine + N(6)-ubiquitinyl-[acceptor protein]-L-lysine.. The protein operates within protein modification; protein ubiquitination. Its activity is regulated as follows. TRIB1 competes with substrates for RFWD2 binding. E3 ubiquitin-protein ligase that mediates ubiquitination and subsequent proteasomal degradation of target proteins. E3 ubiquitin ligases accept ubiquitin from an E2 ubiquitin-conjugating enzyme in the form of a thioester and then directly transfers the ubiquitin to targeted substrates. Involved in JUN ubiquitination and degradation. Directly involved in p53 (TP53) ubiquitination and degradation, thereby abolishing p53-dependent transcription and apoptosis. Ubiquitinates p53 independently of MDM2 or RCHY1. Probably mediates E3 ubiquitin ligase activity by functioning as the essential RING domain subunit of larger E3 complexes. In contrast, it does not constitute the catalytic RING subunit in the DCX DET1-COP1 complex that negatively regulates JUN, the ubiquitin ligase activity being mediated by RBX1. Involved in 14-3-3 protein sigma/SFN ubiquitination and proteasomal degradation, leading to AKT activation and promotion of cell survival. Ubiquitinates MTA1 leading to its proteasomal degradation. Upon binding to TRIB1, ubiquitinates CEBPA, which lacks a canonical COP1-binding motif. The protein is E3 ubiquitin-protein ligase COP1 of Mus musculus (Mouse).